A 229-amino-acid chain; its full sequence is Cytochrome c oxidase subunit 2 (229 aa).

Over 1–14 the chain is Mitochondrial intermembrane; the sequence is MAQQAQLGLQDAAS. The chain crosses the membrane as a helical span at residues 15–45; the sequence is PIMEELIHFHDHTLTVVFLISVLIFYLIIVM. At 46–59 the chain is on the mitochondrial matrix side; it reads VTTTFMNKHSLDSQ. Residues 60–87 traverse the membrane as a helical segment; it reads EVEIVWTVMPAIVLITIALPSLRILYLT. Over 88-229 the chain is Mitochondrial intermembrane; the sequence is DEISNPHLTI…ENWTTKVLAS (142 aa). Cu cation is bound by residues histidine 161, cysteine 196, glutamate 198, cysteine 200, histidine 204, and methionine 207. Glutamate 198 provides a ligand contact to Mg(2+).

The protein belongs to the cytochrome c oxidase subunit 2 family. As to quaternary structure, component of the cytochrome c oxidase (complex IV, CIV), a multisubunit enzyme composed of 14 subunits. The complex is composed of a catalytic core of 3 subunits MT-CO1, MT-CO2 and MT-CO3, encoded in the mitochondrial DNA, and 11 supernumerary subunits COX4I, COX5A, COX5B, COX6A, COX6B, COX6C, COX7A, COX7B, COX7C, COX8 and NDUFA4, which are encoded in the nuclear genome. The complex exists as a monomer or a dimer and forms supercomplexes (SCs) in the inner mitochondrial membrane with NADH-ubiquinone oxidoreductase (complex I, CI) and ubiquinol-cytochrome c oxidoreductase (cytochrome b-c1 complex, complex III, CIII), resulting in different assemblies (supercomplex SCI(1)III(2)IV(1) and megacomplex MCI(2)III(2)IV(2)). Found in a complex with TMEM177, COA6, COX18, COX20, SCO1 and SCO2. Interacts with TMEM177 in a COX20-dependent manner. Interacts with COX20. Interacts with COX16. It depends on Cu cation as a cofactor.

Its subcellular location is the mitochondrion inner membrane. It carries out the reaction 4 Fe(II)-[cytochrome c] + O2 + 8 H(+)(in) = 4 Fe(III)-[cytochrome c] + 2 H2O + 4 H(+)(out). Its function is as follows. Component of the cytochrome c oxidase, the last enzyme in the mitochondrial electron transport chain which drives oxidative phosphorylation. The respiratory chain contains 3 multisubunit complexes succinate dehydrogenase (complex II, CII), ubiquinol-cytochrome c oxidoreductase (cytochrome b-c1 complex, complex III, CIII) and cytochrome c oxidase (complex IV, CIV), that cooperate to transfer electrons derived from NADH and succinate to molecular oxygen, creating an electrochemical gradient over the inner membrane that drives transmembrane transport and the ATP synthase. Cytochrome c oxidase is the component of the respiratory chain that catalyzes the reduction of oxygen to water. Electrons originating from reduced cytochrome c in the intermembrane space (IMS) are transferred via the dinuclear copper A center (CU(A)) of subunit 2 and heme A of subunit 1 to the active site in subunit 1, a binuclear center (BNC) formed by heme A3 and copper B (CU(B)). The BNC reduces molecular oxygen to 2 water molecules using 4 electrons from cytochrome c in the IMS and 4 protons from the mitochondrial matrix. The sequence is that of Cytochrome c oxidase subunit 2 (MT-CO2) from Petromyzon marinus (Sea lamprey).